We begin with the raw amino-acid sequence, 451 residues long: Tubulin gamma-1 chain (451 aa).

Position 131 is a phosphoserine; by BRSK1 (serine 131). 142-148 is a binding site for GTP; the sequence is AGGTGSG.

The protein belongs to the tubulin family. Component of the gamma-tubulin ring complex (gTuRC) consisting of TUBGCP2, TUBGCP3, TUBGCP4, TUBGCP5 and TUBGCP6 and gamma-tubulin TUBG1 or TUBG2. TUBGCP2, TUBGCP3, TUBGCP4, TUBGCP5 and TUBGCP6 assemble in a 5:5:2:1:1 stoichiometry; each is associated with a gamma-tubulin, thereby arranging 14 gamma-tubulins in a helical manner. Gamma-tubulin at the first position is blocked by TUBGCP3 at the last position, allowing 13 protafilaments to grow into a microtubule. The gTuRC (via TUBGCP3 and TUBGCP6) interacts with ACTB and MZT1; the interactions form a luminal bridge that stabilizes the initial structure during complex assembly. The gTuRC (via TUBGCP2) interacts with MZT2A/MZT2B and CDK5RAP2 (via CM1 motif); the interactions play a role in gTuRC activation. Interacts with alpha-beta tubulin heterodimers; the interaction allows microtubules to nucleate from the gTuRC. Interacts with B9D2. Interacts with CDK5RAP2; the interaction is leading to centrosomal localization of TUBG1 and CDK5RAP2. Interacts with CIMAP3. Interacts with SAS6 and NUP62 at the centrosome. Interacts with EML3 (phosphorylated at 'Thr-881') and HAUS8. Interacts with DNM2; this interaction may participate in centrosome cohesion. Interacts with CCDC66. Post-translationally, phosphorylation at Ser-131 by BRSK1 regulates centrosome duplication, possibly by mediating relocation of gamma-tubulin and its associated proteins from the cytoplasm to the centrosome.

It is found in the cytoplasm. It localises to the cytoskeleton. The protein localises to the microtubule organizing center. The protein resides in the centrosome. Its subcellular location is the spindle. Tubulin is the major constituent of microtubules, protein filaments consisting of alpha- and beta-tubulin heterodimers. Gamma-tubulin is a key component of the gamma-tubulin ring complex (gTuRC) which mediates microtubule nucleation. The gTuRC regulates the minus-end nucleation of alpha-beta tubulin heterodimers that grow into microtubule protafilaments, a critical step in centrosome duplication and spindle formation. The polypeptide is Tubulin gamma-1 chain (Mus musculus (Mouse)).